Reading from the N-terminus, the 337-residue chain is tRNA N6-adenosine threonylcarbamoyltransferase (337 aa).

Residues H111 and H115 each contribute to the Fe cation site. Substrate is bound by residues 134–138, D167, G180, and N272; that span reads LVSGG. D300 provides a ligand contact to Fe cation.

It belongs to the KAE1 / TsaD family. Requires Fe(2+) as cofactor.

It localises to the cytoplasm. The enzyme catalyses L-threonylcarbamoyladenylate + adenosine(37) in tRNA = N(6)-L-threonylcarbamoyladenosine(37) in tRNA + AMP + H(+). In terms of biological role, required for the formation of a threonylcarbamoyl group on adenosine at position 37 (t(6)A37) in tRNAs that read codons beginning with adenine. Is involved in the transfer of the threonylcarbamoyl moiety of threonylcarbamoyl-AMP (TC-AMP) to the N6 group of A37, together with TsaE and TsaB. TsaD likely plays a direct catalytic role in this reaction. This Aeromonas salmonicida (strain A449) protein is tRNA N6-adenosine threonylcarbamoyltransferase.